Here is a 449-residue protein sequence, read N- to C-terminus: Putative glycosyltransferase 7 (449 aa).

Over 1–32 (MVSPETSSSHYQSSPMAKYAGTRTRPVVCISD) the chain is Cytoplasmic. Residues 33–53 (VVLFLGGAFMSLILVWSFFSF) form a helical; Signal-anchor for type II membrane protein membrane-spanning segment. The Lumenal portion of the chain corresponds to 54-449 (SSISPNLTVK…VPFDYPDEPW (396 aa)). N-linked (GlcNAc...) asparagine glycosylation is found at Asn-59, Asn-123, and Asn-332.

This sequence belongs to the glycosyltransferase 34 family.

It localises to the golgi apparatus membrane. Probable glycosyltransferase that may be involved in the biosynthesis of xyloglucan. The protein is Putative glycosyltransferase 7 (GT7) of Arabidopsis thaliana (Mouse-ear cress).